Consider the following 129-residue polypeptide: uncharacterized protein (129 aa).

This sequence belongs to the asfivirus C129R family.

Its subcellular location is the virion. Functionally, plays a role in the inhibition of type I interferon signaling pathway. Mechanistically, specifically interacts with 2',3'-cGAMP and cleaves it via its phosphodiesterase activity. In turn, prevents 2',3'-cGAMP interaction with host ER-resident STING1 leading to inhibition of downstream signaling pathway and type I interferon production. This is an uncharacterized protein from Ornithodoros (relapsing fever ticks).